The chain runs to 350 residues: Inositol 2-dehydrogenase/D-chiro-inositol 3-dehydrogenase (350 aa).

This sequence belongs to the Gfo/Idh/MocA family. In terms of assembly, homotetramer.

It carries out the reaction myo-inositol + NAD(+) = scyllo-inosose + NADH + H(+). The catalysed reaction is 1D-chiro-inositol + NAD(+) = scyllo-inosine + NADH + H(+). It functions in the pathway polyol metabolism; myo-inositol degradation into acetyl-CoA; acetyl-CoA from myo-inositol: step 1/7. Involved in the oxidation of myo-inositol (MI) and D-chiro-inositol (DCI) to 2-keto-myo-inositol (2KMI or 2-inosose) and 1-keto-D-chiro-inositol (1KDCI), respectively. The polypeptide is Inositol 2-dehydrogenase/D-chiro-inositol 3-dehydrogenase (Lactiplantibacillus plantarum (strain ATCC BAA-793 / NCIMB 8826 / WCFS1) (Lactobacillus plantarum)).